A 359-amino-acid polypeptide reads, in one-letter code: Chorismate synthase (359 aa).

R47 is an NADP(+) binding site. Residues 123–125, G283, 298–302, and R326 each bind FMN; these read RSS and KPTSS.

Belongs to the chorismate synthase family. In terms of assembly, homotetramer. It depends on FMNH2 as a cofactor.

The catalysed reaction is 5-O-(1-carboxyvinyl)-3-phosphoshikimate = chorismate + phosphate. It functions in the pathway metabolic intermediate biosynthesis; chorismate biosynthesis; chorismate from D-erythrose 4-phosphate and phosphoenolpyruvate: step 7/7. Functionally, catalyzes the anti-1,4-elimination of the C-3 phosphate and the C-6 proR hydrogen from 5-enolpyruvylshikimate-3-phosphate (EPSP) to yield chorismate, which is the branch point compound that serves as the starting substrate for the three terminal pathways of aromatic amino acid biosynthesis. This reaction introduces a second double bond into the aromatic ring system. In Chlamydia felis (strain Fe/C-56) (Chlamydophila felis), this protein is Chorismate synthase.